Consider the following 83-residue polypeptide: Apolipoprotein C-I, acidic form (83 aa).

The signal sequence occupies residues 1-26; the sequence is MRLFLSLPVLVVVLSMVLEGPAPAQG.

It belongs to the apolipoprotein C1 family.

Its subcellular location is the secreted. The protein is Apolipoprotein C-I, acidic form (APOC1A) of Pan troglodytes (Chimpanzee).